The sequence spans 241 residues: MPVTKCPRKVEPPWKGWDRKAQKNGLRHQVFAVNGDHYVGEWKGNLKHGKGTQVWKKSGAVYEGDWKFGKRDGYGSLSHPDPETGKLRRVYSGWWKGDKKSGYGIQFFGPKEYYEGEWCNNQRSGWGRMYYNNGDIYEGQWQNDKPEGEGMLRLKNGNRYEGIWERGMKNGHGRFFHLDHGQLFEGYWVDNVAKCGTMIDFGRDEAPEPTQFPIPKVEILDPDGVLKEALDKLMKPEEEEG.

The interval 6-35 (CPRKVEPPWKGWDRKAQKNGLRHQVFAVNG) is interaction with MDM2. MORN repeat units lie at residues 38–60 (YVGE…KSGA), 62–84 (YEGD…DPET), 91–113 (YSGW…PKEY), 114–136 (YEGE…NGDI), 137–159 (YEGQ…NGNR), 160–182 (YEGI…DHGQ), and 184–205 (FEGY…GRDE). The interaction with SIRT1 stretch occupies residues 76–100 (SLSHPDPETGKLRRVYSGWWKGDKK). The interval 206 to 240 (APEPTQFPIPKVEILDPDGVLKEALDKLMKPEEEE) is interaction with TP53.

In terms of assembly, interacts with MEIG1. Interacts with TP53, MDM2 and SIRT1; the interactions mediate post-transcriptional modifications of TP53 by MDM2 and SIRT1. As to expression, expressed in testis (at protein level).

The protein localises to the cytoplasmic vesicle. Its subcellular location is the secretory vesicle. It localises to the acrosome. Assembles a suppression complex (suppresome) by tethering SIRT1 and MDM2 to regulate composite modifications of p53/TP53. Confers both deacetylation-mediated functional inactivation, by SIRT1, and ubiquitination-dependent degradation, by MDM2, of p53/TP53, promoting a proliferative and cell survival behaviors. May play a role in the regulation of spermatogenesis. The protein is MORN repeat-containing protein 3 (Morn3) of Mus musculus (Mouse).